A 238-amino-acid chain; its full sequence is Chromosome partition protein MukE (238 aa).

Residues 206 to 238 (EESSQSSFDLDENEKLSDISAEEQHELELEGDA) are disordered. A compositionally biased stretch (basic and acidic residues) spans 218–238 (NEKLSDISAEEQHELELEGDA).

Belongs to the MukE family. In terms of assembly, interacts, and probably forms a ternary complex, with MukF and MukB. The complex formation is stimulated by calcium or magnesium.

Its subcellular location is the cytoplasm. The protein resides in the nucleoid. Its function is as follows. Involved in chromosome condensation, segregation and cell cycle progression. May participate in facilitating chromosome segregation by condensation DNA from both sides of a centrally located replisome during cell division. Probably acts via its interaction with MukB and MukF. This is Chromosome partition protein MukE from Aliivibrio salmonicida (strain LFI1238) (Vibrio salmonicida (strain LFI1238)).